The chain runs to 437 residues: Transcription factor AP-2-alpha (437 aa).

Lysine 10 participates in a covalent cross-link: Glycyl lysine isopeptide (Lys-Gly) (interchain with G-Cter in SUMO); alternate. Residue lysine 10 forms a Glycyl lysine isopeptide (Lys-Gly) (interchain with G-Cter in SUMO2); alternate linkage. Positions 14–107 are disordered; that stretch reads CEDRHDGTSN…GQRQSQESGL (94 aa). Residues 57-62 carry the PPxY motif motif; sequence YFPPPY. Low complexity-rich tracts occupy residues 65–74 and 88–101; these read IYPQSQDPYS and QPQPQHPGWPGQRQ. Residues lysine 177 and lysine 184 each participate in a glycyl lysine isopeptide (Lys-Gly) (interchain with G-Cter in SUMO2) cross-link. Serine 239 is subject to Phosphoserine; by PKA. Residues 280 to 410 are H-S-H (helix-span-helix), dimerization; the sequence is RRKAANVTLL…YLTEALKAMD (131 aa). Over residues 414–427 the composition is skewed to polar residues; it reads LSNNPNSHTDNSAK. Residues 414–437 are disordered; sequence LSNNPNSHTDNSAKSSDKEEKHRK. The segment covering 428–437 has biased composition (basic and acidic residues); it reads SSDKEEKHRK.

The protein belongs to the AP-2 family. As to quaternary structure, binds DNA as a dimer. Can form homodimers or heterodimers with other AP-2 family members. Interacts with WWOX. Interacts with UBE2I. Interacts with RALBP1 in a complex also containing EPN1 and NUMB during interphase and mitosis. Interacts with CITED4. Interacts with KCTD1; this interaction represses transcription activation. Interacts (via C-terminus) with CITED2 (via C-terminus); the interaction stimulates TFAP2A-transcriptional activation. Interacts (via N-terminus) with EP300 (via N-terminus); the interaction requires CITED2. Interacts with KCTD15; this interaction inhibits TFAP2A transcriptional activation. Post-translationally, sumoylated on Lys-10; which inhibits transcriptional activity.

It is found in the nucleus. Its function is as follows. Sequence-specific DNA-binding protein that interacts with inducible viral and cellular enhancer elements to regulate transcription of selected genes. AP-2 factors bind to the consensus sequence 5'-GCCNNNGGC-3' and activate genes involved in a large spectrum of important biological functions including proper eye, face, body wall, limb and neural tube development. They also suppress a number of genes including MCAM/MUC18, C/EBP alpha and MYC. AP-2-alpha is the only AP-2 protein required for early morphogenesis of the lens vesicle. Together with the CITED2 coactivator, stimulates the PITX2 P1 promoter transcription activation. Associates with chromatin to the PITX2 P1 promoter region. This chain is Transcription factor AP-2-alpha (Tfap2a), found in Mus musculus (Mouse).